The sequence spans 695 residues: Elongation factor G 2 (695 aa).

The tr-type G domain occupies 5 to 280; sequence SLYRNIGIFA…AVVDYLPSPT (276 aa). GTP contacts are provided by residues 14 to 21, 78 to 82, and 132 to 135; these read AHVDAGKT, DTPGH, and NKLD.

It belongs to the TRAFAC class translation factor GTPase superfamily. Classic translation factor GTPase family. EF-G/EF-2 subfamily.

The protein resides in the cytoplasm. Catalyzes the GTP-dependent ribosomal translocation step during translation elongation. During this step, the ribosome changes from the pre-translocational (PRE) to the post-translocational (POST) state as the newly formed A-site-bound peptidyl-tRNA and P-site-bound deacylated tRNA move to the P and E sites, respectively. Catalyzes the coordinated movement of the two tRNA molecules, the mRNA and conformational changes in the ribosome. This is Elongation factor G 2 from Vibrio cholerae serotype O1 (strain ATCC 39315 / El Tor Inaba N16961).